We begin with the raw amino-acid sequence, 412 residues long: Aspartokinase (412 aa).

2 consecutive ACT domains span residues 266-340 (LTIR…GDTN) and 346-412 (IVGV…RQGE).

Belongs to the aspartokinase family.

It carries out the reaction L-aspartate + ATP = 4-phospho-L-aspartate + ADP. The protein operates within amino-acid biosynthesis; L-lysine biosynthesis via DAP pathway; (S)-tetrahydrodipicolinate from L-aspartate: step 1/4. It functions in the pathway amino-acid biosynthesis; L-methionine biosynthesis via de novo pathway; L-homoserine from L-aspartate: step 1/3. It participates in amino-acid biosynthesis; L-threonine biosynthesis; L-threonine from L-aspartate: step 1/5. The sequence is that of Aspartokinase (lysC) from Pseudomonas aeruginosa (strain ATCC 15692 / DSM 22644 / CIP 104116 / JCM 14847 / LMG 12228 / 1C / PRS 101 / PAO1).